Consider the following 237-residue polypeptide: Phosphoribosylaminoimidazole-succinocarboxamide synthase (237 aa).

This sequence belongs to the SAICAR synthetase family.

The catalysed reaction is 5-amino-1-(5-phospho-D-ribosyl)imidazole-4-carboxylate + L-aspartate + ATP = (2S)-2-[5-amino-1-(5-phospho-beta-D-ribosyl)imidazole-4-carboxamido]succinate + ADP + phosphate + 2 H(+). Its pathway is purine metabolism; IMP biosynthesis via de novo pathway; 5-amino-1-(5-phospho-D-ribosyl)imidazole-4-carboxamide from 5-amino-1-(5-phospho-D-ribosyl)imidazole-4-carboxylate: step 1/2. This Salmonella agona (strain SL483) protein is Phosphoribosylaminoimidazole-succinocarboxamide synthase.